The chain runs to 208 residues: Ribonuclease HII (208 aa).

The RNase H type-2 domain occupies G18–C208. Residues D24, E25, and D116 each contribute to the a divalent metal cation site.

It belongs to the RNase HII family. It depends on Mn(2+) as a cofactor. Requires Mg(2+) as cofactor.

It is found in the cytoplasm. It carries out the reaction Endonucleolytic cleavage to 5'-phosphomonoester.. Its function is as follows. Endonuclease that specifically degrades the RNA of RNA-DNA hybrids. The sequence is that of Ribonuclease HII from Shewanella loihica (strain ATCC BAA-1088 / PV-4).